The primary structure comprises 61 residues: Small ribosomal subunit protein uS14 (61 aa).

4 residues coordinate Zn(2+): Cys24, Cys27, Cys40, and Cys43.

This sequence belongs to the universal ribosomal protein uS14 family. Zinc-binding uS14 subfamily. As to quaternary structure, part of the 30S ribosomal subunit. Contacts proteins S3 and S10. Requires Zn(2+) as cofactor.

Its function is as follows. Binds 16S rRNA, required for the assembly of 30S particles and may also be responsible for determining the conformation of the 16S rRNA at the A site. In Nitratidesulfovibrio vulgaris (strain ATCC 29579 / DSM 644 / CCUG 34227 / NCIMB 8303 / VKM B-1760 / Hildenborough) (Desulfovibrio vulgaris), this protein is Small ribosomal subunit protein uS14.